The following is a 198-amino-acid chain: Carnitine operon protein CaiE (198 aa).

The tract at residues 174 to 198 is disordered; sequence KPLTQAEENRPRLKGTTDVKPKSAQ. The span at 180–198 shows a compositional bias: basic and acidic residues; it reads EENRPRLKGTTDVKPKSAQ.

This sequence belongs to the transferase hexapeptide repeat family.

Its pathway is amine and polyamine metabolism; carnitine metabolism. Functionally, overproduction of CaiE stimulates the activity of CaiB and CaiD. This is Carnitine operon protein CaiE from Salmonella typhimurium (strain LT2 / SGSC1412 / ATCC 700720).